A 244-amino-acid chain; its full sequence is Small ribosomal subunit protein eS4 (244 aa).

The region spanning L43–E106 is the S4 RNA-binding domain.

It belongs to the eukaryotic ribosomal protein eS4 family.

This chain is Small ribosomal subunit protein eS4, found in Methanococcus maripaludis (strain DSM 14266 / JCM 13030 / NBRC 101832 / S2 / LL).